The sequence spans 37 residues: Large ribosomal subunit protein bL36c (37 aa).

It belongs to the bacterial ribosomal protein bL36 family.

The protein resides in the plastid. It localises to the chloroplast. This Pelargonium hortorum (Common geranium) protein is Large ribosomal subunit protein bL36c.